The sequence spans 255 residues: Alpha-acetolactate decarboxylase (255 aa).

It belongs to the alpha-acetolactate decarboxylase family.

It catalyses the reaction (2S)-2-acetolactate + H(+) = (R)-acetoin + CO2. It functions in the pathway polyol metabolism; (R,R)-butane-2,3-diol biosynthesis; (R,R)-butane-2,3-diol from pyruvate: step 2/3. Functionally, converts acetolactate into acetoin, which can be excreted by the cells. This may be a mechanism for controlling the internal pH of cells in the stationary stage. The polypeptide is Alpha-acetolactate decarboxylase (alsD) (Bacillus subtilis (strain 168)).